Consider the following 979-residue polypeptide: Receptor-type tyrosine-protein phosphatase-like N (979 aa).

The first 34 residues, 1–34, serve as a signal peptide directing secretion; it reads MRRPRRPGGLGGSGGLRLLLCLLLLSSRPGGCSA. The segment at 35–131 is RESP18 homology domain; the sequence is VSAHGCLFDR…RPRDRSGLAP (97 aa). Topologically, residues 35–575 are lumenal; that stretch reads VSAHGCLFDR…QTAHSTSPMR (541 aa). A disulfide bridge connects residues Cys-53 and Cys-62. 2 stretches are compositionally biased toward basic and acidic residues: residues 112–127 and 304–323; these read RIPR…RDRS and RAED…RGEK. Disordered stretches follow at residues 112–173, 289–329, and 393–439; these read RIPR…SSSL, SRAR…SPAV, and VEGR…ARPP. Ser-308 is subject to Phosphoserine. Positions 415–433 are enriched in low complexity; the sequence is SPTSSEVQQVPSPVSSEPP. Thr-441 carries O-linked (GalNAc...) threonine glycosylation. The sufficient for dimerization of proICA512 stretch occupies residues 449–575; the sequence is SPLGQSQPTV…QTAHSTSPMR (127 aa). N-linked (GlcNAc...) asparagine glycosylation is found at Asn-506 and Asn-524. A helical transmembrane segment spans residues 576 to 600; that stretch reads SVLLTLVALAGVAGLLVALAVALCV. A sufficient for dimerization of proICA512 region spans residues 601 to 732; it reads RQHARQQDKE…PNTCATAQGE (132 aa). Over 601–979 the chain is Cytoplasmic; the sequence is RQHARQQDKE…VNAILKALPQ (379 aa). The disordered stretch occupies residues 643 to 680; that stretch reads NRAEGPPEPSRVSSVSSQFSDAAQASPSSHSSTPSWCE. The span at 652–677 shows a compositional bias: low complexity; that stretch reads SRVSSVSSQFSDAAQASPSSHSSTPS. The region spanning 709-969 is the Tyrosine-protein phosphatase domain; it reads LAKEWQALCA…EFALTAVAEE (261 aa). Residue Lys-754 forms a Glycyl lysine isopeptide (Lys-Gly) (interchain with G-Cter in SUMO) linkage.

This sequence belongs to the protein-tyrosine phosphatase family. Receptor class 8 subfamily. As to quaternary structure, homodimer; shown for the unprocessed protein (proICA512) in the endoplasmic reticulum and resolved during protein maturation as ICA512-TMF seems to be predominantly monomeric in secretory granules; however, ICA512-CCF interacts with ICA512-TMF disrupting the ICA512-TMF:SNTB2 complex. The isolated lumenal RESP18 homology domain has been shown to form disulfide-linked homooligomers. Interacts (via cytoplasmic domain) with phosphorylated SNTB2; this protects PTPRN against cleavage by CAPN1 to produce ICA512-CCF. Dephosphorylation of SNTB2 upon insulin stimulation disrupts the interaction and results in PTPRN cleavage. Interacts with SNX19. ICA512-CCF interacts with PIAS4; in the nucleus. Interacts with STAT5B (phosphorylated); down-regulated by ICA512-CCF sumoylation; ICA512-CCF prevents STAT5B dephosphorylation; ICA512-CCF mediates interaction of STAT5B with PIAS4. Interacts (via RESP18 homology domain) with insulin and proinsulin. Interacts with PTPRN2, PTPRA and PTPRE. In terms of processing, N-glycosylated. O-glycosylated with core 1 or possibly core 8 glycans. Post-translationally, subject to proteolytic cleavage at multiple sites. Subject to cleavage on a pair of basic residues. On exocytosis of secretory granules in pancreatic beta-cells ICA512-TMF is transiently inserted in the plasma-membrane and cleaved by mu-type calpain CPN1 to yield ICA512-CCF. In terms of processing, sumoylated at two sites including Lys-754. Sumoylation decreases interaction with STAT5. As to expression, expression is restricted to neuroendocrine cells. Found in pancreas, brain and pituitary.

It localises to the membrane. The protein localises to the cytoplasmic vesicle. It is found in the secretory vesicle membrane. The protein resides in the perikaryon. Its subcellular location is the cell projection. It localises to the axon. The protein localises to the synapse. It is found in the cell membrane. The protein resides in the endosome. Its subcellular location is the nucleus. Plays a role in vesicle-mediated secretory processes. Required for normal accumulation of secretory vesicles in hippocampus, pituitary and pancreatic islets. Required for the accumulation of normal levels of insulin-containing vesicles and preventing their degradation. Plays a role in insulin secretion in response to glucose stimuli. Required for normal accumulation of the neurotransmitters norepinephrine, dopamine and serotonin in the brain. In females, but not in males, required for normal accumulation and secretion of pituitary hormones, such as luteinizing hormone (LH) and follicle-stimulating hormone (FSH). Required to maintain normal levels of renin expression and renin release. Seems to lack intrinsic enzyme activity. May regulate catalytic active protein-tyrosine phosphatases such as PTPRA through dimerization. Its function is as follows. ICA512-TMF regulates dynamics and exocytosis of insulin secretory granules (SGs); binding of ICA512-TMF to SNTB2/beta-2-syntrophin is proposed to restrain SGs mobility and exocytosis by tethering them to the actin cytoskeleton depending on UTRN; the function is inhibited by cytoplasmic ICA512-CFF dimerizing with ICA512-TMF and displacing SNTB2. Functionally, ICA512-CCF translocated to the nucleus promotes expression of insulin and other granule-related genes; the function implicates binding to and regulating activity of STAT5B probably by preventing its dephosphorylation and potentially by inducing its sumoylation by recruiting PIAS4. Enhances pancreatic beta-cell proliferation by converging with signaling by STAT5B and STAT3. ICA512-CCF located in the cytoplasm regulates dynamics and exocytosis of insulin secretory granules (SGs) by dimerizing with ICA512-TMF and displacing SNTB2 thus enhancing SGs mobility and exocytosis. This is Receptor-type tyrosine-protein phosphatase-like N (PTPRN) from Homo sapiens (Human).